Consider the following 392-residue polypeptide: Chorismate synthase (392 aa).

R39 and R45 together coordinate NADP(+). FMN-binding positions include 131 to 133 (RSS), 255 to 256 (NA), G300, 315 to 319 (KPIPT), and R341.

This sequence belongs to the chorismate synthase family. As to quaternary structure, homotetramer. FMNH2 is required as a cofactor.

It catalyses the reaction 5-O-(1-carboxyvinyl)-3-phosphoshikimate = chorismate + phosphate. It functions in the pathway metabolic intermediate biosynthesis; chorismate biosynthesis; chorismate from D-erythrose 4-phosphate and phosphoenolpyruvate: step 7/7. In terms of biological role, catalyzes the anti-1,4-elimination of the C-3 phosphate and the C-6 proR hydrogen from 5-enolpyruvylshikimate-3-phosphate (EPSP) to yield chorismate, which is the branch point compound that serves as the starting substrate for the three terminal pathways of aromatic amino acid biosynthesis. This reaction introduces a second double bond into the aromatic ring system. The chain is Chorismate synthase from Leuconostoc citreum (strain KM20).